Reading from the N-terminus, the 367-residue chain is Gelsolin-like protein 1 (367 aa).

Residues 1–185 (MATGLIKAKE…GQKQQIYVHE (185 aa)) form an actin binding region. 2 Gelsolin-like repeats span residues 56-141 (NFKV…ELFR) and 179-225 (QQIY…KAMQ). Residues 106–109 (DEYG) are actin-actin interfilament contact point. An actin binding, Actin-severing region spans residues 186-295 (VPLVKERLDH…LKTTEVKRGA (110 aa)). Residues 235-257 (PKAEAETLEDESTPESHKFYTSL) form a disordered region. Residues 287-322 (KTTEVKRGAVNSKDFSSNDVFILDTGDQCFVWVGKG) form a Gelsolin-like 3 repeat. The segment at 296–366 (VNSKDFSSND…LCKAFNVAIA (71 aa)) is actin-severing, Ca-sensitive.

It belongs to the villin/gelsolin family. As to quaternary structure, interacts with actin monomers and filaments. Expressed in circular and longitudinal muscle, pseudohearts, pharynx and gizzard. Also expressed in male germ cells at the proximal pole of primary spermatocytes in 16 cell-stage morulae, and in the distal parts of the spermatocytes in 32 and 64 cell-stage morulae. In the spermatids of the 128 cell-stage morulae it is expressed at the proximal pole of the elongated nucleus and the distal pole near the base of the flagellae.

The protein resides in the cytoplasm. Its subcellular location is the cytoskeleton. Functionally, calcium-regulated protein that binds to the plus (or barbed) ends of actin monomers or filaments, preventing monomer exchange (end-blocking or capping). Can promote the assembly of monomers into filaments (nucleation) as well as sever existing filaments. This chain is Gelsolin-like protein 1, found in Lumbricus terrestris (Common earthworm).